A 196-amino-acid chain; its full sequence is Large ribosomal subunit protein bL9 (196 aa).

The segment at asparagine 172–alanine 196 is disordered. Positions phenylalanine 181–alanine 196 are enriched in acidic residues.

Belongs to the bacterial ribosomal protein bL9 family.

Binds to the 23S rRNA. The chain is Large ribosomal subunit protein bL9 from Chelativorans sp. (strain BNC1).